The following is an 836-amino-acid chain: ATP-binding cassette sub-family B member 6 (836 aa).

At 1–26 (MVTVGNYCEAEGPAGPAWTQNGLSPC) the chain is on the lumenal side. The tract at residues 1 to 205 (MVTVGNYCEA…SGGLFILGLW (205 aa)) is required for the lysosomal targeting. The segment at 1-236 (MVTVGNYCEA…RNQGRSTDPR (236 aa)) is required for ATPase activity. Cys8 and Cys26 are joined by a disulfide. Residues 27 to 47 (FFYTLVPSTLMTLGVLALVLV) form a helical membrane-spanning segment. The Cytoplasmic portion of the chain corresponds to 48–72 (LPCRRREVPAGTEELSWAAGPRVAP). The helical transmembrane segment at 73–93 (YALQLSLAILQMALPLASLAG) threads the bilayer. The Lumenal segment spans residues 94 to 106 (RVGTARGVRLPGY). A helical transmembrane segment spans residues 107 to 127 (LLLASVLESLASACGLWLLVV). The Cytoplasmic segment spans residues 128–147 (ERSQARQSLAMGVWMKFRHS). The chain crosses the membrane as a helical span at residues 148 to 168 (LGLLLLWTVTFAAENLVLVSW). The Lumenal portion of the chain corresponds to 169–185 (NSPQWWWSRADLGQQVQ). A helical membrane pass occupies residues 186–206 (FGLWVLRYMTSGGLFILGLWA). Topologically, residues 207–264 (PGLRPQSYTLHVNEEDQDGGRNQGRSTDPRSTWRDLGRKLRLLSGYLWPRGSPSLQLT) are cytoplasmic. The chain crosses the membrane as a helical span at residues 265–285 (VLLCMGLMGLDRALNVLVPIF). Positions 265 to 556 (VLLCMGLMGL…FGTYYRMIQT (292 aa)) constitute an ABC transmembrane type-1 domain. Topologically, residues 286-305 (YRDIVNLLTSKAPWSSLAWT) are lumenal. The chain crosses the membrane as a helical span at residues 306-326 (VTTYVFLKFLQGGGTGSTGFV). Over 327–375 (SNLRTFLWIRVQQFTSRGVELRLFSHLHELSLRWHLGRRTGEVLRIVDR) the chain is Cytoplasmic. The chain crosses the membrane as a helical span at residues 376–396 (GTSSVTGLLSYLVFNIIPTLA). Position 397 (Asp397) is a topological domain, lumenal. A helical transmembrane segment spans residues 398–418 (IIIGIIYFSMFFNAWFGLIVF). The Cytoplasmic portion of the chain corresponds to 419–499 (LCMSLYLILT…STASLVLLNQ (81 aa)). The chain crosses the membrane as a helical span at residues 500 to 520 (TQNMVIGFGLLAGSLLCAYFV). Residues 521–529 (SERRLQVGD) lie on the Lumenal side of the membrane. The chain crosses the membrane as a helical span at residues 530-550 (FVLFGTYITQLYMPLNWFGTY). Residues 551-836 (YRMIQTNFID…QGQETVPEDS (286 aa)) lie on the Cytoplasmic side of the membrane. The 235-residue stretch at 590 to 824 (VEFENVHFSY…GGVYAEMWQL (235 aa)) folds into the ABC transporter domain. Residues Tyr599 and 623 to 634 (GPSGAGKSTILR) contribute to the ATP site.

The protein belongs to the ABC transporter superfamily. ABCB family. Heavy Metal importer (TC 3.A.1.210) subfamily. In terms of assembly, homodimer. In terms of processing, N-glycosylated. Ubiquitously expressed. Highly expressed in testis by meiotic pachytene spermatocytes and post-meiotic early spermatids.

The protein resides in the cell membrane. It localises to the mitochondrion outer membrane. The protein localises to the endoplasmic reticulum membrane. It is found in the golgi apparatus membrane. Its subcellular location is the endosome membrane. The protein resides in the lysosome membrane. It localises to the late endosome membrane. The protein localises to the early endosome membrane. It is found in the secreted. Its subcellular location is the extracellular exosome. The protein resides in the mitochondrion. It localises to the endosome. The protein localises to the multivesicular body membrane. It is found in the melanosome membrane. It catalyses the reaction heme b(in) + ATP + H2O = heme b(out) + ADP + phosphate + H(+). The catalysed reaction is coproporphyrin III(in) + ATP + H2O = coproporphyrin III(out) + ADP + phosphate + H(+). It carries out the reaction pheophorbide a(in) + ATP + H2O = pheophorbide a(out) + ADP + phosphate + H(+). The enzyme catalyses coproporphyrinogen III(in) + ATP + H2O = coproporphyrinogen III(out) + ADP + phosphate + H(+). It catalyses the reaction protoporphyrin IX(in) + ATP + H2O = protoporphyrin IX(out) + ADP + phosphate + H(+). The catalysed reaction is coproporphyrin I(in) + ATP + H2O = coproporphyrin I(out) + ADP + phosphate + H(+). It carries out the reaction uroporphyrin I(in) + ATP + H2O = uroporphyrin I(out) + ADP + phosphate + H(+). The enzyme catalyses uroporphyrin III(in) + ATP + H2O = uroporphyrin III(out) + ADP + phosphate + H(+). ATP-dependent transporter that catalyzes the transport of a broad-spectrum of porphyrins from the cytoplasm to the extracellular space through the plasma membrane or into the vesicle lumen. May also function as an ATP-dependent importer of porphyrins from the cytoplasm into the mitochondria, in turn may participate in the de novo heme biosynthesis regulation and in the coordination of heme and iron homeostasis during phenylhydrazine stress. May play a key role in the early steps of melanogenesis producing PMEL amyloid fibrils. In vitro, it confers to cells a resistance to toxic metal such as arsenic and cadmium and against chemotherapeutics agent such as 5-fluorouracil, SN-38 and vincristin. In addition may play a role in the transition metal homeostasis. The protein is ATP-binding cassette sub-family B member 6 of Rattus norvegicus (Rat).